A 372-amino-acid chain; its full sequence is Cyclin-dependent kinase 9 (372 aa).

Positions 19-315 (YEKLAKIGQG…SDDALNHDFF (297 aa)) constitute a Protein kinase domain. Residues 25–33 (IGQGTFGEV) and Lys48 each bind ATP. Asp149 (proton acceptor) is an active-site residue. The interval 341–372 (PPRRRGGHMPQQPANQGRNPAATNQTEFDRVF) is disordered. The span at 352–366 (QPANQGRNPAATNQT) shows a compositional bias: polar residues.

Belongs to the protein kinase superfamily. CMGC Ser/Thr protein kinase family. CDC2/CDKX subfamily. Associates with cyclin-T to form P-TEFb. Also associates with cyclin-K.

It localises to the nucleus. The catalysed reaction is L-seryl-[protein] + ATP = O-phospho-L-seryl-[protein] + ADP + H(+). It carries out the reaction L-threonyl-[protein] + ATP = O-phospho-L-threonyl-[protein] + ADP + H(+). It catalyses the reaction [DNA-directed RNA polymerase] + ATP = phospho-[DNA-directed RNA polymerase] + ADP + H(+). Member of the cyclin-dependent kinase pair (CDK9/cyclin-T) complex, also called positive transcription elongation factor b (P-TEFb), which facilitates the transition from abortive to production elongation by phosphorylating the CTD (C-terminal domain) of the large subunit of RNA polymerase II (RNAP II), SUPT5H and RDBP. The CDK9/cyclin-K complex also has a kinase activity toward CTD of RNAP II and can substitute for P-TEFb in vitro. This is Cyclin-dependent kinase 9 (CDK9) from Gallus gallus (Chicken).